We begin with the raw amino-acid sequence, 560 residues long: Oxygen-dependent choline dehydrogenase 1 (560 aa).

An FAD-binding site is contributed by 8–37 (DYIIIGAGSAGNVLATRLTEDPDVQVLLLE). Residue H475 is the Proton acceptor of the active site.

Belongs to the GMC oxidoreductase family. FAD is required as a cofactor.

The catalysed reaction is choline + A = betaine aldehyde + AH2. It carries out the reaction betaine aldehyde + NAD(+) + H2O = glycine betaine + NADH + 2 H(+). The protein operates within amine and polyamine biosynthesis; betaine biosynthesis via choline pathway; betaine aldehyde from choline (cytochrome c reductase route): step 1/1. Involved in the biosynthesis of the osmoprotectant glycine betaine. Catalyzes the oxidation of choline to betaine aldehyde and betaine aldehyde to glycine betaine at the same rate. This Chromohalobacter salexigens (strain ATCC BAA-138 / DSM 3043 / CIP 106854 / NCIMB 13768 / 1H11) protein is Oxygen-dependent choline dehydrogenase 1.